We begin with the raw amino-acid sequence, 476 residues long: Cysteine--tRNA ligase (476 aa).

Cys29 is a Zn(2+) binding site. Residues 31 to 41 (PTVYDYTHIGH) carry the 'HIGH' region motif. 3 residues coordinate Zn(2+): Cys209, His234, and Glu238. Residues 266-270 (KMSKS) carry the 'KMSKS' region motif. Lys269 is an ATP binding site.

Belongs to the class-I aminoacyl-tRNA synthetase family. Requires Zn(2+) as cofactor.

It localises to the cytoplasm. The catalysed reaction is tRNA(Cys) + L-cysteine + ATP = L-cysteinyl-tRNA(Cys) + AMP + diphosphate. This chain is Cysteine--tRNA ligase, found in Thermococcus kodakarensis (strain ATCC BAA-918 / JCM 12380 / KOD1) (Pyrococcus kodakaraensis (strain KOD1)).